The primary structure comprises 263 residues: Isoprenyl transferase (263 aa).

Asp-38 is a catalytic residue. Asp-38 contacts Mg(2+). Residues 39 to 42 (GNRR), His-55, and 83 to 85 (STD) contribute to the substrate site. The active-site Proton acceptor is the Asn-86. Residues Phe-87, Arg-89, Arg-212, and 218–220 (RLS) each bind substrate. Mg(2+) is bound at residue Glu-231.

The protein belongs to the UPP synthase family. Homodimer. The cofactor is Mg(2+).

Its function is as follows. Catalyzes the condensation of isopentenyl diphosphate (IPP) with allylic pyrophosphates generating different type of terpenoids. This Thermus thermophilus (strain ATCC BAA-163 / DSM 7039 / HB27) protein is Isoprenyl transferase.